The chain runs to 275 residues: MDWVYAIVYGIVEGITEFLPISSTGHLILTGNLMGVPWSKEVKDAFEVVIQGGAILSVLVYYWRDFLKIRHLGHDRSQQTLWTGVLVATIPAVVLGLAFGDQIQAVLFKPSVVAWALIVGGVLMWLIESRRVQPQVHAIETIGVRRSLLIGVLQCLALVWPGFSRSASSILGGMALGLDRPTATKFSFYLGVPTLGGAALLNLVKERELIFGEIGLLNVVLGAGVSFVVAYLAIGWLLKFVSTNNFKGFAVYRVAVGVLILVLIATGVMSNGSLA.

Helical transmembrane passes span 1-21, 42-62, 80-100, 107-127, 147-167, 184-204, 214-234, and 249-269; these read MDWV…FLPI, VKDA…LVYY, TLWT…LAFG, LFKP…MWLI, SLLI…SRSA, TKFS…LNLV, IGLL…YLAI, and FAVY…TGVM.

It belongs to the UppP family.

Its subcellular location is the cell membrane. It carries out the reaction di-trans,octa-cis-undecaprenyl diphosphate + H2O = di-trans,octa-cis-undecaprenyl phosphate + phosphate + H(+). Its function is as follows. Catalyzes the dephosphorylation of undecaprenyl diphosphate (UPP). Confers resistance to bacitracin. The polypeptide is Undecaprenyl-diphosphatase (Deinococcus deserti (strain DSM 17065 / CIP 109153 / LMG 22923 / VCD115)).